Reading from the N-terminus, the 808-residue chain is Na(+)/H(+) antiporter 2 (808 aa).

A run of 9 helical transmembrane segments spans residues 12–32, 36–56, 70–90, 105–125, 128–148, 174–194, 203–223, 244–264, and 267–287; these read HVAY…SLFV, LYIG…PHCL, ITLE…SVEL, LLVP…WILV, LNFP…PVLA, CNDG…LYPG, WICV…CIIG, FLAF…MLGV, and LLVS…AAKT. Asn291 carries N-linked (GlcNAc...) asparagine glycosylation. 5 consecutive transmembrane segments (helical) span residues 294-314, 319-339, 361-381, 409-429, and 432-452; these read NVID…ILPW, NPDI…VIFL, AMFI…AITS, VMAC…IVHG, and VAVI…LPTG. Disordered stretches follow at residues 478-499 and 541-562; these read QRLD…SGMV and HAST…NGRA. Residues 542–561 show a composition bias toward polar residues; sequence ASTNDSHGTTTANLGTSNGR. 2 N-linked (GlcNAc...) asparagine glycosylation sites follow: Asn545 and Asn602. The disordered stretch occupies residues 774-808; sequence LHSEDEMADDEAESENDMDYEDSDGPASRFKDHAD. A compositionally biased stretch (acidic residues) spans 779–797; the sequence is EMADDEAESENDMDYEDSD.

Belongs to the fungal Na(+)/H(+) exchanger family.

Its subcellular location is the membrane. Functionally, sodium export from cell, takes up external protons in exchange for internal sodium ions. Seems to be poorly expressed. This chain is Na(+)/H(+) antiporter 2 (SOD22), found in Zygosaccharomyces rouxii.